Here is a 463-residue protein sequence, read N- to C-terminus: Rop guanine nucleotide exchange factor 4 (463 aa).

Disordered regions lie at residues 1-25 (MESS…YRRT) and 55-87 (GHEE…SDID). The span at 59–68 (DVSEDAEEPK) shows a compositional bias: acidic residues. Residues 69–78 (DDVVNDVHGD) are compositionally biased toward basic and acidic residues. In terms of domain architecture, PRONE spans 84–463 (SDIDSAEDAE…VDRTVRNRDD (380 aa)).

As to quaternary structure, interacts with ARAC10/ROP11. As to expression, expressed in root vascular tissue and trichoblast cell files. Expressed in root metaxylem cell files. Expressed in guard cells of cotyledons, rosette leaves, sepals, petal, stigmas and siliques. Expressed in root metaxylem cell files.

It localises to the cytoplasm. The protein localises to the cell membrane. Guanine-nucleotide exchange factor (GEF) that acts as an activator of Rop (Rho of plants) GTPases by promoting the exchange of GDP for GTP. In association with ROPGEF1, acts as a specific regulator of ARAC10/ROP11 function in ABA-mediated stomatal closure. The protein is Rop guanine nucleotide exchange factor 4 (ROPGEF4) of Arabidopsis thaliana (Mouse-ear cress).